The sequence spans 400 residues: 8-amino-7-oxononanoate synthase (400 aa).

Residue Arg21 participates in substrate binding. Pyridoxal 5'-phosphate is bound at residue 112 to 113 (GY). Residue His137 participates in substrate binding. 3 residues coordinate pyridoxal 5'-phosphate: Ser183, His211, and Thr239. At Lys242 the chain carries N6-(pyridoxal phosphate)lysine. A substrate-binding site is contributed by Thr358.

It belongs to the class-II pyridoxal-phosphate-dependent aminotransferase family. BioF subfamily. Homodimer. Pyridoxal 5'-phosphate serves as cofactor.

It carries out the reaction 6-carboxyhexanoyl-[ACP] + L-alanine + H(+) = (8S)-8-amino-7-oxononanoate + holo-[ACP] + CO2. It functions in the pathway cofactor biosynthesis; biotin biosynthesis. Its function is as follows. Catalyzes the decarboxylative condensation of pimeloyl-[acyl-carrier protein] and L-alanine to produce 8-amino-7-oxononanoate (AON), [acyl-carrier protein], and carbon dioxide. This chain is 8-amino-7-oxononanoate synthase, found in Burkholderia lata (strain ATCC 17760 / DSM 23089 / LMG 22485 / NCIMB 9086 / R18194 / 383).